A 497-amino-acid polypeptide reads, in one-letter code: Lysine--tRNA ligase (497 aa).

Positions 409 and 416 each coordinate Mg(2+).

This sequence belongs to the class-II aminoacyl-tRNA synthetase family. Homodimer. Mg(2+) is required as a cofactor.

It localises to the cytoplasm. The enzyme catalyses tRNA(Lys) + L-lysine + ATP = L-lysyl-tRNA(Lys) + AMP + diphosphate. The sequence is that of Lysine--tRNA ligase from Streptococcus pyogenes serotype M6 (strain ATCC BAA-946 / MGAS10394).